The sequence spans 388 residues: Zinc finger protein 1 (388 aa).

The span at 1-19 shows a compositional bias: polar residues; it reads MSSIPNINWNDPNNGKSNT. Disordered regions lie at residues 1–120, 157–219, and 236–311; these read MSSI…QQPL, LQQR…QQWD, and SSIQ…KPIT. Residues 20 to 38 are compositionally biased toward low complexity; sequence SRQSQPQPQLPSNVSPPNS. Composition is skewed to polar residues over residues 52-67 and 88-97; these read YGSS…NPNT and YPVQQTAQQR. Low complexity-rich tracts occupy residues 102-120 and 157-172; these read LQQV…QQPL and LQQR…KSQL. Residues 173–203 show a composition bias toward polar residues; that stretch reads NEQNAMMSASTQQYPVQDFTNPYPNAQNPAE. Low complexity-rich tracts occupy residues 204-217 and 236-259; these read QQQQ…QSQQ and SSIQ…KQQQ. Residues 268-278 are compositionally biased toward basic residues; the sequence is KKKPGRKPKLR. Residues 282–294 are compositionally biased toward polar residues; the sequence is ESSSETPQVPKTA. The zn(2)-C6 fungal-type DNA-binding region spans 318-345; it reads CLTCRQRKKRCCETRPRCTECTRLRLNC. Residues 348 to 367 are disordered; the sequence is PKPGTEHKNKPKDQKDDENT. The segment covering 351 to 367 has biased composition (basic and acidic residues); the sequence is GTEHKNKPKDQKDDENT.

The protein resides in the nucleus. Functionally, perhaps a regulatory role. May be involved in transcriptional activation. In Candida albicans (strain WO-1) (Yeast), this protein is Zinc finger protein 1 (CZF1).